Here is a 576-residue protein sequence, read N- to C-terminus: Putative export ATP-binding/permease protein RT0691 (576 aa).

In terms of domain architecture, ABC transmembrane type-1 spans 20-303 (LIIVMISLLS…IFELLSEIHL (284 aa)). 6 consecutive transmembrane segments (helical) span residues 21 to 41 (IIVMISLLSVSASLLLIGSVF), 61 to 81 (ILYICLLIVILSVASFFRSYF), 135 to 155 (FLSFFIRNSVMLIGGITLMFF), 158 to 178 (FKLASIVIVTIPILLVPLIKF), 242 to 262 (ALFFAISIAVIFLTITLIVWI), and 277 to 297 (IISFIYYAIIAGVSSGGIFEL). An ABC transporter domain is found at 336–572 (IEFKNVDFTY…SEIYRNICRE (237 aa)). 371 to 378 (GRSGAGKS) contacts ATP.

It belongs to the ABC transporter superfamily. In terms of assembly, homodimer.

It localises to the cell inner membrane. In terms of biological role, part of an ABC transporter complex. Transmembrane domains (TMD) form a pore in the inner membrane and the ATP-binding domain (NBD) is responsible for energy generation. In Rickettsia typhi (strain ATCC VR-144 / Wilmington), this protein is Putative export ATP-binding/permease protein RT0691.